A 73-amino-acid polypeptide reads, in one-letter code: Protein SlyX homolog (73 aa).

It belongs to the SlyX family.

The chain is Protein SlyX homolog from Histophilus somni (strain 129Pt) (Haemophilus somnus).